The chain runs to 429 residues: Mannose-6-phosphate isomerase (429 aa).

The Zn(2+) site is built by Q110, H112, E137, and H282. R301 is a catalytic residue.

Belongs to the mannose-6-phosphate isomerase type 1 family. Zn(2+) is required as a cofactor.

The protein resides in the cytoplasm. The enzyme catalyses D-mannose 6-phosphate = D-fructose 6-phosphate. It participates in nucleotide-sugar biosynthesis; GDP-alpha-D-mannose biosynthesis; alpha-D-mannose 1-phosphate from D-fructose 6-phosphate: step 1/2. In terms of biological role, involved in the synthesis of the GDP-mannose and dolichol-phosphate-mannose required for a number of critical mannosyl transfer reactions. The protein is Mannose-6-phosphate isomerase (PMI1) of Candida glabrata (strain ATCC 2001 / BCRC 20586 / JCM 3761 / NBRC 0622 / NRRL Y-65 / CBS 138) (Yeast).